A 655-amino-acid polypeptide reads, in one-letter code: SRSF protein kinase 1 (655 aa).

A disordered region spans residues 1–57 (MERKVLALQARKKRTKAKKDKAQRKSETQHRGSAPHSESDLPEQEEEILGSDDDEQE). The segment covering 10-22 (ARKKRTKAKKDKA) has biased composition (basic residues). Acidic residues predominate over residues 40-57 (DLPEQEEEILGSDDDEQE). Ser51 bears the Phosphoserine; by CK2 mark. A Protein kinase domain is found at 80–653 (YHVIRKLGWG…AAECLRHPWL (574 aa)). Residues 86-94 (LGWGHFSTV), Lys109, and 166-168 (EVL) each bind ATP. Asp213 functions as the Proton acceptor in the catalytic mechanism. Disordered stretches follow at residues 238 to 341 (WQRS…QDQT) and 397 to 417 (FLSSQNGDSSTSQETDSCTPI). Basic residues predominate over residues 265 to 276 (KNKKKKLKKKQK). Composition is skewed to basic and acidic residues over residues 277–288 (RQAELLEKRMQE) and 304–318 (NKQEESESPVERPLK). Phosphoserine is present on residues Ser309, Ser311, and Ser333. Phosphoserine; by CK2 is present on Ser555.

This sequence belongs to the protein kinase superfamily. CMGC Ser/Thr protein kinase family. Monomer. Isoform 2 is found in a multisubunit complex containing seven proteins, named toposome, which separates entangled circular chromatin DNA during chromosome segregation. Isoform 2 interacts with DNAJC8 and AHSA1/AHA1 and this mediates formation of a complex with the Hsp70 /Hsp90 machinery. Isoform 1 is found in a complex with: DHX9, MOV10, MATR3, HNRNPU, NCL, DDX21, HSD17B4, PABPC1, HNRNPM, IGF2BP1, SYNCRIP, RPL3, VIM, YBX1, NPM1, HNRNPA2B1, HNRNPC, RPLP0, RPL7A and RALY. Isoform 2 binds to IGF2BP1, SYNCRIP, HNRNPA2B1 and HNRNPC. Isoform 1 and isoform 2 interact with SAFB which inhibits its activity. Isoform 2 interacts with SAFB2 which inhibits its activity. As to quaternary structure, (Microbial infection) Isoform 2 interacts with HHV-1 ICP27 protein. Mg(2+) serves as cofactor. As to expression, isoform 2 is predominantly expressed in the testis but is also present at lower levels in heart, ovary, small intestine, liver, kidney, pancreas and skeletal muscle. Isoform 1 is only seen in the testis, at lower levels than isoform 2. Highly expressed in different erythroid and lymphoid cell lines, with isoform 2 being far more abundant than isoform 1.

It is found in the cytoplasm. The protein resides in the nucleus. The protein localises to the nucleus matrix. Its subcellular location is the microsome. It localises to the nucleoplasm. It is found in the nucleus speckle. The protein resides in the chromosome. It carries out the reaction L-seryl-[protein] + ATP = O-phospho-L-seryl-[protein] + ADP + H(+). It catalyses the reaction L-threonyl-[protein] + ATP = O-phospho-L-threonyl-[protein] + ADP + H(+). Activated by phosphorylation on Ser-51 and Ser-555. Its function is as follows. Serine/arginine-rich protein-specific kinase which specifically phosphorylates its substrates at serine residues located in regions rich in arginine/serine dipeptides, known as RS domains and is involved in the phosphorylation of SR splicing factors and the regulation of splicing. Plays a central role in the regulatory network for splicing, controlling the intranuclear distribution of splicing factors in interphase cells and the reorganization of nuclear speckles during mitosis. Can influence additional steps of mRNA maturation, as well as other cellular activities, such as chromatin reorganization in somatic and sperm cells and cell cycle progression. Isoform 2 phosphorylates SFRS2, ZRSR2, LBR and PRM1. Isoform 2 phosphorylates SRSF1 using a directional (C-terminal to N-terminal) and a dual-track mechanism incorporating both processive phosphorylation (in which the kinase stays attached to the substrate after each round of phosphorylation) and distributive phosphorylation steps (in which the kinase and substrate dissociate after each phosphorylation event). The RS domain of SRSF1 binds first to a docking groove in the large lobe of the kinase domain of SRPK1. This induces certain structural changes in SRPK1 and/or RRM2 domain of SRSF1, allowing RRM2 to bind the kinase and initiate phosphorylation. The cycles continue for several phosphorylation steps in a processive manner (steps 1-8) until the last few phosphorylation steps (approximately steps 9-12). During that time, a mechanical stress induces the unfolding of the beta-4 motif in RRM2, which then docks at the docking groove of SRPK1. This also signals RRM2 to begin to dissociate, which facilitates SRSF1 dissociation after phosphorylation is completed. Isoform 2 can mediate hepatitis B virus (HBV) core protein phosphorylation. It plays a negative role in the regulation of HBV replication through a mechanism not involving the phosphorylation of the core protein but by reducing the packaging efficiency of the pregenomic RNA (pgRNA) without affecting the formation of the viral core particles. Isoform 1 and isoform 2 can induce splicing of exon 10 in MAPT/TAU. The ratio of isoform 1/isoform 2 plays a decisive role in determining cell fate in K-562 leukaemic cell line: isoform 2 favors proliferation where as isoform 1 favors differentiation. This Homo sapiens (Human) protein is SRSF protein kinase 1.